A 352-amino-acid chain; its full sequence is Lipase chaperone (352 aa).

Residues 7-28 traverse the membrane as a helical segment; that stretch reads LSLVAVVVAGGLTLYWRWPAAV.

Belongs to the lipase chaperone family.

It localises to the cell inner membrane. In terms of biological role, may be involved in the folding of the extracellular lipase during its passage through the periplasm. The sequence is that of Lipase chaperone (lifO) from Pseudomonas wisconsinensis.